The chain runs to 125 residues: DNA-directed RNA polymerase II subunit RPB9 (125 aa).

Met-1 is modified (N-acetylmethionine). Positions 17, 20, 39, 42, 86, 89, 114, and 119 each coordinate Zn(2+). A C4-type zinc finger spans residues 17–42 (CQECNNMLYPKEDKENRILLYACRNC). The TFIIS-type zinc-finger motif lies at 82–124 (EDHPCQKCGHKEAVFFQSHSARAEDAMRLYYVCTAPHCGHRWT).

It belongs to the archaeal RpoM/eukaryotic RPA12/RPB9/RPC11 RNA polymerase family. Component of the RNA polymerase II (Pol II) core complex consisting of 12 subunits: a ten-subunit catalytic core composed of POLR2A/RPB1, POLR2B/RPB2, POLR2C/RPB3, POLR2I/RPB9, POLR2J/RPB11, POLR2E/RPABC1, POLR2F/RPABC2, POLR2H/RPABC3, POLR2K/RPABC4 and POLR2L/RPABC5 and a mobile stalk composed of two subunits POLR2D/RPB4 and POLR2G/RPB7, protruding from the core and functioning primarily in transcription initiation. Part of Pol II(G) complex, in which Pol II core associates with an additional subunit POLR2M; unlike conventional Pol II, Pol II(G) functions as a transcriptional repressor. Part of TBP-based Pol II pre-initiation complex (PIC), in which Pol II core assembles with general transcription factors and other specific initiation factors including GTF2E1, GTF2E2, GTF2F1, GTF2F2, TCEA1, ERCC2, ERCC3, GTF2H2, GTF2H3, GTF2H4, GTF2H5, GTF2A1, GTF2A2, GTF2B and TBP; this large multi-subunit PIC complex mediates DNA unwinding and targets Pol II core to the transcription start site where the first phosphodiester bond forms.

It localises to the nucleus. Its subcellular location is the nucleolus. Its function is as follows. DNA-dependent RNA polymerase catalyzes the transcription of DNA into RNA using the four ribonucleoside triphosphates as substrates. Component of RNA polymerase II which synthesizes mRNA precursors and many functional non-coding RNAs. Pol II is the central component of the basal RNA polymerase II transcription machinery. It is composed of mobile elements that move relative to each other. POLR2I/RPB9 is part of the upper jaw surrounding the central large cleft and thought to grab the incoming DNA template. In Bos taurus (Bovine), this protein is DNA-directed RNA polymerase II subunit RPB9 (POLR2I).